The chain runs to 175 residues: RNA pyrophosphohydrolase (175 aa).

Positions 6 to 150 constitute a Nudix hydrolase domain; the sequence is GFRPNVGIVI…KREVYRRVMK (145 aa). Residues 38–59 carry the Nudix box motif; it reads GGVDDGETPEQAMYRELYEEIG.

It belongs to the Nudix hydrolase family. RppH subfamily. Requires a divalent metal cation as cofactor.

Accelerates the degradation of transcripts by removing pyrophosphate from the 5'-end of triphosphorylated RNA, leading to a more labile monophosphorylated state that can stimulate subsequent ribonuclease cleavage. The protein is RNA pyrophosphohydrolase of Aeromonas hydrophila subsp. hydrophila (strain ATCC 7966 / DSM 30187 / BCRC 13018 / CCUG 14551 / JCM 1027 / KCTC 2358 / NCIMB 9240 / NCTC 8049).